Reading from the N-terminus, the 1378-residue chain is DNA-directed RNA polymerase subunit beta (1378 aa).

This sequence belongs to the RNA polymerase beta chain family. As to quaternary structure, the RNAP catalytic core consists of 2 alpha, 1 beta, 1 beta' and 1 omega subunit. When a sigma factor is associated with the core the holoenzyme is formed, which can initiate transcription.

The catalysed reaction is RNA(n) + a ribonucleoside 5'-triphosphate = RNA(n+1) + diphosphate. DNA-dependent RNA polymerase catalyzes the transcription of DNA into RNA using the four ribonucleoside triphosphates as substrates. In Mesorhizobium japonicum (strain LMG 29417 / CECT 9101 / MAFF 303099) (Mesorhizobium loti (strain MAFF 303099)), this protein is DNA-directed RNA polymerase subunit beta.